Here is a 506-residue protein sequence, read N- to C-terminus: Galactose/methyl galactoside import ATP-binding protein MglA (506 aa).

ABC transporter domains are found at residues 14–249 (LEMS…VGRS) and 264–506 (VILE…SLHL). Residue 46-53 (GENGAGKS) participates in ATP binding.

It belongs to the ABC transporter superfamily. Galactose/methyl galactoside importer (TC 3.A.1.2.3) family. The complex is composed of one ATP-binding protein (MglA), two transmembrane proteins (MglC) and a solute-binding protein (MglB).

Its subcellular location is the cell inner membrane. It carries out the reaction D-galactose(out) + ATP + H2O = D-galactose(in) + ADP + phosphate + H(+). The enzyme catalyses methyl beta-D-galactoside(out) + ATP + H2O = methyl beta-D-galactoside(in) + ADP + phosphate + H(+). Functionally, part of the ABC transporter complex MglABC involved in galactose/methyl galactoside import. Responsible for energy coupling to the transport system. The chain is Galactose/methyl galactoside import ATP-binding protein MglA from Escherichia coli (strain K12).